Consider the following 53-residue polypeptide: Sodium/potassium-transporting ATPase subunit gamma (53 aa).

A helical membrane pass occupies residues 16-34 (GGLIFAALAFIVGLVIILS).

Belongs to the FXYD family. In terms of assembly, regulatory subunit of the sodium/potassium-transporting ATPase which is composed of a catalytic alpha subunit, an auxiliary non-catalytic beta subunit and an additional regulatory subunit. Post-translationally, the N-terminus is blocked. Highest levels expressed in the kidney and spleen. Restricted to the basolateral membrane in renal epithelial cells and varies in its level of expression along the nephron.

Its subcellular location is the membrane. Its function is as follows. May be involved in forming the receptor site for cardiac glycoside binding or may modulate the transport function of the sodium ATPase. The polypeptide is Sodium/potassium-transporting ATPase subunit gamma (FXYD2) (Ovis aries (Sheep)).